Consider the following 163-residue polypeptide: HTH-type transcriptional regulator IscR (163 aa).

Positions 2–131 (RLTSKGRYAV…NNITLGELVN (130 aa)) constitute an HTH rrf2-type domain. Residues 28–51 (LADISERQGISLSYLEQLFSRLRK) constitute a DNA-binding region (H-T-H motif). 3 residues coordinate [2Fe-2S] cluster: C92, C98, and C104.

Requires [2Fe-2S] cluster as cofactor.

Its function is as follows. Regulates the transcription of several operons and genes involved in the biogenesis of Fe-S clusters and Fe-S-containing proteins. This chain is HTH-type transcriptional regulator IscR, found in Enterobacter sp. (strain 638).